We begin with the raw amino-acid sequence, 249 residues long: Coproheme decarboxylase (249 aa).

Fe-coproporphyrin III is bound by residues R131, 145–149, H172, and Q185; that span reads YPMDK. Residue Y145 is part of the active site.

This sequence belongs to the ChdC family. Type 1 subfamily. Requires Fe-coproporphyrin III as cofactor.

The enzyme catalyses Fe-coproporphyrin III + 2 H2O2 + 2 H(+) = heme b + 2 CO2 + 4 H2O. It catalyses the reaction Fe-coproporphyrin III + H2O2 + H(+) = harderoheme III + CO2 + 2 H2O. It carries out the reaction harderoheme III + H2O2 + H(+) = heme b + CO2 + 2 H2O. It functions in the pathway porphyrin-containing compound metabolism; protoheme biosynthesis. In terms of biological role, involved in coproporphyrin-dependent heme b biosynthesis. Catalyzes the decarboxylation of Fe-coproporphyrin III (coproheme) to heme b (protoheme IX), the last step of the pathway. The reaction occurs in a stepwise manner with a three-propionate intermediate. The sequence is that of Coproheme decarboxylase from Staphylococcus epidermidis (strain ATCC 35984 / DSM 28319 / BCRC 17069 / CCUG 31568 / BM 3577 / RP62A).